The chain runs to 328 residues: Twinfilin (328 aa).

One can recognise an ADF-H 1 domain in the interval 1–137 (MSASVELKPT…DYQQIMKSLS (137 aa)). Position 143 is a phosphoserine (serine 143). The region spanning 173 to 304 (GVAMSIDDKA…TEKEILHAAG (132 aa)) is the ADF-H 2 domain. The tract at residues 302 to 328 (AAGISSPQAETSTTKTGFSRPRPPRRR) is disordered. Polar residues predominate over residues 306-318 (SSPQAETSTTKTG).

Belongs to the actin-binding proteins ADF family. Twinfilin subfamily. Interacts with G-actin; ADP-actin form.

The protein resides in the cytoplasm. It is found in the cytoskeleton. Its function is as follows. Actin-binding protein involved in motile and morphological processes. Inhibits actin polymerization, likely by sequestering G-actin. Prevents actin filament assembly by forming a 1:1 complex with actin monomers, and inhibits the nucleotide exchange reaction of actin monomers. The protein is Twinfilin (twf1) of Schizosaccharomyces pombe (strain 972 / ATCC 24843) (Fission yeast).